A 100-amino-acid polypeptide reads, in one-letter code: MHLSPQEKDKLLIVTAALLAERRLNRGVKLNHPEAMAWLSFLVLEGARDGQTVAELMQAGTTWLRRDQVMEGVPELVEEVQIEAVFPDGTKLVTLHDPIR.

The protein belongs to the urease gamma subunit family. Heterotrimer of UreA (gamma), UreB (beta) and UreC (alpha) subunits. Three heterotrimers associate to form the active enzyme.

It localises to the cytoplasm. The catalysed reaction is urea + 2 H2O + H(+) = hydrogencarbonate + 2 NH4(+). It functions in the pathway nitrogen metabolism; urea degradation; CO(2) and NH(3) from urea (urease route): step 1/1. The chain is Urease subunit gamma from Synechococcus sp. (strain CC9902).